Consider the following 507-residue polypeptide: Alkyl hydroperoxide reductase subunit F (507 aa).

207 to 222 (DVLIVGGGPASGSAAI) contacts FAD. An intrachain disulfide couples Cys-335 to Cys-338. 347 to 361 (DVAVIGGGNSGVEAA) contributes to the NAD(+) binding site. 467–477 (TNVPGIFAAGD) is an FAD binding site.

This sequence belongs to the class-II pyridine nucleotide-disulfide oxidoreductase family. As to quaternary structure, homodimer. FAD serves as cofactor.

Its function is as follows. Serves to protect the cell against DNA damage by alkyl hydroperoxides. It can use either NADH or NADPH as electron donor for direct reduction of redox dyes or of alkyl hydroperoxides when combined with the AhpC protein. The sequence is that of Alkyl hydroperoxide reductase subunit F (ahpF) from Staphylococcus aureus (strain Mu50 / ATCC 700699).